The following is a 316-amino-acid chain: MNPNFLDFEQPIADLQAKIEELRLVGNDNSLNIGDEIARLQDKSESLTEGIFGNLTSWQIARLARHPQRPYTLDYINHLFTEFEELHGDRHFSDDAAIVGGTARLDGQPVMVIGHQKGREVREKVRRNFGMPRPEGYRKACRLMEMAERFKMPILTFIDTPGAYPGIDAEERNQSEAIAWNLRVMARLKTPIIATVIGEGGSGGALAIGVCDQLNMLQYSTYAVISPEGCASILWRTAEKAPEAAEAMGVTAERLKDLGIVDKVIPEPLGGAHRNPAVMAAAMREQLNSQLHMLKSLDTDALLARRYERLMSYGIA.

The CoA carboxyltransferase C-terminal domain occupies 39–293 (RLQDKSESLT…REQLNSQLHM (255 aa)).

This sequence belongs to the AccA family. In terms of assembly, acetyl-CoA carboxylase is a heterohexamer composed of biotin carboxyl carrier protein (AccB), biotin carboxylase (AccC) and two subunits each of ACCase subunit alpha (AccA) and ACCase subunit beta (AccD).

The protein resides in the cytoplasm. It catalyses the reaction N(6)-carboxybiotinyl-L-lysyl-[protein] + acetyl-CoA = N(6)-biotinyl-L-lysyl-[protein] + malonyl-CoA. Its pathway is lipid metabolism; malonyl-CoA biosynthesis; malonyl-CoA from acetyl-CoA: step 1/1. Its function is as follows. Component of the acetyl coenzyme A carboxylase (ACC) complex. First, biotin carboxylase catalyzes the carboxylation of biotin on its carrier protein (BCCP) and then the CO(2) group is transferred by the carboxyltransferase to acetyl-CoA to form malonyl-CoA. In Stutzerimonas stutzeri (strain A1501) (Pseudomonas stutzeri), this protein is Acetyl-coenzyme A carboxylase carboxyl transferase subunit alpha.